A 97-amino-acid chain; its full sequence is Large ribosomal subunit protein uL23 (97 aa).

The protein belongs to the universal ribosomal protein uL23 family. Part of the 50S ribosomal subunit. Contacts protein L29, and trigger factor when it is bound to the ribosome.

Its function is as follows. One of the early assembly proteins it binds 23S rRNA. One of the proteins that surrounds the polypeptide exit tunnel on the outside of the ribosome. Forms the main docking site for trigger factor binding to the ribosome. This is Large ribosomal subunit protein uL23 from Limosilactobacillus fermentum (strain NBRC 3956 / LMG 18251) (Lactobacillus fermentum).